A 157-amino-acid polypeptide reads, in one-letter code: Small ribosomal subunit protein uS9 (157 aa).

This sequence belongs to the universal ribosomal protein uS9 family.

This Caulobacter sp. (strain K31) protein is Small ribosomal subunit protein uS9.